We begin with the raw amino-acid sequence, 544 residues long: CTP synthase (544 aa).

An amidoligase domain region spans residues 1–265 (MTQYIFITGG…DDLVVKHFGL (265 aa)). A CTP-binding site is contributed by S13. S13 is a binding site for UTP. ATP-binding positions include 14–19 (SLGKGI) and D71. The Mg(2+) site is built by D71 and E139. Residues 146-148 (DIE), 186-191 (KTKPTQ), and K222 contribute to the CTP site. UTP-binding positions include 186–191 (KTKPTQ) and K222. The Glutamine amidotransferase type-1 domain occupies 290-541 (TVAMVGKYVN…IAAALDYQTE (252 aa)). G351 lines the L-glutamine pocket. The Nucleophile; for glutamine hydrolysis role is filled by C378. Residues 379–382 (LGLQ), E402, and R469 contribute to the L-glutamine site. Active-site residues include H514 and E516.

The protein belongs to the CTP synthase family. Homotetramer.

It catalyses the reaction UTP + L-glutamine + ATP + H2O = CTP + L-glutamate + ADP + phosphate + 2 H(+). The enzyme catalyses L-glutamine + H2O = L-glutamate + NH4(+). The catalysed reaction is UTP + NH4(+) + ATP = CTP + ADP + phosphate + 2 H(+). The protein operates within pyrimidine metabolism; CTP biosynthesis via de novo pathway; CTP from UDP: step 2/2. With respect to regulation, allosterically activated by GTP, when glutamine is the substrate; GTP has no effect on the reaction when ammonia is the substrate. The allosteric effector GTP functions by stabilizing the protein conformation that binds the tetrahedral intermediate(s) formed during glutamine hydrolysis. Inhibited by the product CTP, via allosteric rather than competitive inhibition. Its function is as follows. Catalyzes the ATP-dependent amination of UTP to CTP with either L-glutamine or ammonia as the source of nitrogen. Regulates intracellular CTP levels through interactions with the four ribonucleotide triphosphates. This is CTP synthase from Dichelobacter nodosus (strain VCS1703A).